The sequence spans 430 residues: Adenylosuccinate synthetase (430 aa).

GTP-binding positions include 12–18 (GDEGKGK) and 40–42 (GHT). The active-site Proton acceptor is Asp-13. 2 residues coordinate Mg(2+): Asp-13 and Gly-40. Residues 13 to 16 (DEGK), 38 to 41 (NAGH), Thr-130, Arg-144, Gln-224, Thr-239, and Arg-303 contribute to the IMP site. His-41 functions as the Proton donor in the catalytic mechanism. 299 to 305 (ATTGRPR) is a substrate binding site. Residues Arg-305, 331 to 333 (KLD), and 413 to 415 (SVG) each bind GTP.

It belongs to the adenylosuccinate synthetase family. Homodimer. Mg(2+) serves as cofactor.

It localises to the cytoplasm. The enzyme catalyses IMP + L-aspartate + GTP = N(6)-(1,2-dicarboxyethyl)-AMP + GDP + phosphate + 2 H(+). It functions in the pathway purine metabolism; AMP biosynthesis via de novo pathway; AMP from IMP: step 1/2. Functionally, plays an important role in the de novo pathway of purine nucleotide biosynthesis. Catalyzes the first committed step in the biosynthesis of AMP from IMP. The chain is Adenylosuccinate synthetase from Trichlorobacter lovleyi (strain ATCC BAA-1151 / DSM 17278 / SZ) (Geobacter lovleyi).